A 263-amino-acid polypeptide reads, in one-letter code: Phosphonoacetaldehyde hydrolase (263 aa).

Asp-10 (nucleophile) is an active-site residue. Positions 10 and 12 each coordinate Mg(2+). Residue Lys-51 is the Schiff-base intermediate with substrate of the active site. Asp-184 provides a ligand contact to Mg(2+).

The protein belongs to the HAD-like hydrolase superfamily. PhnX family. Homodimer. Mg(2+) serves as cofactor.

The enzyme catalyses phosphonoacetaldehyde + H2O = acetaldehyde + phosphate + H(+). Involved in phosphonate degradation. This chain is Phosphonoacetaldehyde hydrolase, found in Bacteroides fragilis (strain ATCC 25285 / DSM 2151 / CCUG 4856 / JCM 11019 / LMG 10263 / NCTC 9343 / Onslow / VPI 2553 / EN-2).